A 201-amino-acid chain; its full sequence is MSTRSLTIFILAHVWLLMATTSIAQFVIDTSGEPVEDDEEYFIRPAITGNGGGSTLVTGNGPCPLHVGLDNTEGTLGVAVKFTPFAPQHDDDDVRLNRDLRVTFLTSTSCGQSTDWRLGEKDATSGRRLIVTGRDNGAGSQGNFFRIVQTQTGGTYNIQWCPTEACPSCKVQCGTVGVIRENGKNLLALDGDALPVVFQKE.

A signal peptide spans 1–24 (MSTRSLTIFILAHVWLLMATTSIA). 3 disulfide bridges follow: cysteine 63–cysteine 110, cysteine 161–cysteine 173, and cysteine 166–cysteine 169.

Belongs to the protease inhibitor I3 (leguminous Kunitz-type inhibitor) family. Interacts with CP.

It localises to the secreted. It is found in the extracellular space. The protein localises to the apoplast. In terms of biological role, protease inhibitor involved in the control of mycorrhiza establishment and arbuscule development during root colonization by arbuscular mycorrhizal (AM) fungi (e.g. Rhizophagus irregularis). This chain is Kunitz type trypsin inhibitor 104, found in Medicago truncatula (Barrel medic).